Here is a 323-residue protein sequence, read N- to C-terminus: Fructose-bisphosphate aldolase (323 aa).

Ser50 contacts beta-D-fructose 1,6-bisphosphate. Asp83 serves as the catalytic Proton donor. His84 and His178 together coordinate Zn(2+). Residues His178, Gly179, and Lys182 each contribute to the beta-D-fructose 1,6-bisphosphate site. Zn(2+) is bound at residue His210. Beta-D-fructose 1,6-bisphosphate-binding residues include Gly211, Ser213, Asn253, Asp255, Ser256, Arg259, and Arg280.

This sequence belongs to the class II fructose-bisphosphate aldolase family. As to quaternary structure, homodimer. The cofactor is Zn(2+).

The catalysed reaction is beta-D-fructose 1,6-bisphosphate = D-glyceraldehyde 3-phosphate + dihydroxyacetone phosphate. It participates in carbohydrate degradation; glycolysis; D-glyceraldehyde 3-phosphate and glycerone phosphate from D-glucose: step 4/4. In terms of biological role, plays a key role in glycolysis by catalyzing the cleavage of fructose 1,6-bisphosphate into dihydroxyacetone phosphate and glyceraldehyde 3-phosphate. Does not cleave D-tagatose-1,6-bisphosphate. This chain is Fructose-bisphosphate aldolase, found in Giardia intestinalis (strain ATCC 50803 / WB clone C6) (Giardia lamblia).